The primary structure comprises 226 residues: ATP synthase F(0) complex subunit a (226 aa).

At methionine 1 the chain carries N-formylmethionine. Helical transmembrane passes span 9 to 29 (FITPVILGLPLVTLIVLFPSL), 68 to 88 (WTLMLMSLILFIGSTNLLGLL), 97 to 117 (QLSMNLGMAIPLWAGAVITGF), 138 to 158 (IPMLVIIETISLFIQPMALAV), 164 to 184 (ITAGHLLIHLIGGATLALMSI), and 189 to 209 (ALITFTILILLTILEFAVAMI).

The protein belongs to the ATPase A chain family. In terms of assembly, component of the ATP synthase complex composed at least of ATP5F1A/subunit alpha, ATP5F1B/subunit beta, ATP5MC1/subunit c (homooctomer), MT-ATP6/subunit a, MT-ATP8/subunit 8, ATP5ME/subunit e, ATP5MF/subunit f, ATP5MG/subunit g, ATP5MK/subunit k, ATP5MJ/subunit j, ATP5F1C/subunit gamma, ATP5F1D/subunit delta, ATP5F1E/subunit epsilon, ATP5PF/subunit F6, ATP5PB/subunit b, ATP5PD/subunit d, ATP5PO/subunit OSCP. ATP synthase complex consists of a soluble F(1) head domain (subunits alpha(3) and beta(3)) - the catalytic core - and a membrane F(0) domain - the membrane proton channel (subunits c, a, 8, e, f, g, k and j). These two domains are linked by a central stalk (subunits gamma, delta, and epsilon) rotating inside the F1 region and a stationary peripheral stalk (subunits F6, b, d, and OSCP). Interacts with DNAJC30; interaction is direct.

It localises to the mitochondrion inner membrane. The catalysed reaction is H(+)(in) = H(+)(out). Subunit a, of the mitochondrial membrane ATP synthase complex (F(1)F(0) ATP synthase or Complex V) that produces ATP from ADP in the presence of a proton gradient across the membrane which is generated by electron transport complexes of the respiratory chain. ATP synthase complex consist of a soluble F(1) head domain - the catalytic core - and a membrane F(1) domain - the membrane proton channel. These two domains are linked by a central stalk rotating inside the F(1) region and a stationary peripheral stalk. During catalysis, ATP synthesis in the catalytic domain of F(1) is coupled via a rotary mechanism of the central stalk subunits to proton translocation. With the subunit c (ATP5MC1), forms the proton-conducting channel in the F(0) domain, that contains two crucial half-channels (inlet and outlet) that facilitate proton movement from the mitochondrial intermembrane space (IMS) into the matrix. Protons are taken up via the inlet half-channel and released through the outlet half-channel, following a Grotthuss mechanism. This Bos taurus (Bovine) protein is ATP synthase F(0) complex subunit a.